The following is a 329-amino-acid chain: Glycerol-3-phosphate dehydrogenase [NAD(P)+] (329 aa).

3 residues coordinate NADPH: tryptophan 15, histidine 35, and lysine 107. Sn-glycerol 3-phosphate-binding residues include lysine 107, glycine 135, and serine 137. Residue alanine 139 coordinates NADPH. Sn-glycerol 3-phosphate is bound by residues lysine 190, aspartate 243, serine 253, arginine 254, and asparagine 255. Lysine 190 serves as the catalytic Proton acceptor. NADPH is bound at residue arginine 254. Positions 276 and 278 each coordinate NADPH.

The protein belongs to the NAD-dependent glycerol-3-phosphate dehydrogenase family.

It is found in the cytoplasm. The enzyme catalyses sn-glycerol 3-phosphate + NAD(+) = dihydroxyacetone phosphate + NADH + H(+). It catalyses the reaction sn-glycerol 3-phosphate + NADP(+) = dihydroxyacetone phosphate + NADPH + H(+). It functions in the pathway membrane lipid metabolism; glycerophospholipid metabolism. Its function is as follows. Catalyzes the reduction of the glycolytic intermediate dihydroxyacetone phosphate (DHAP) to sn-glycerol 3-phosphate (G3P), the key precursor for phospholipid synthesis. The polypeptide is Glycerol-3-phosphate dehydrogenase [NAD(P)+] (Rhodopseudomonas palustris (strain HaA2)).